The following is a 104-amino-acid chain: uncharacterized protein (104 aa).

This is an uncharacterized protein from Mycobacterium tuberculosis (strain CDC 1551 / Oshkosh).